The sequence spans 175 residues: Protein FMP23, mitochondrial (175 aa).

Residues 1–38 (MLINHLSKIRTVRHFSNIKPVLSKEVSRRVIVAPASHF) constitute a mitochondrion transit peptide.

The protein resides in the mitochondrion. May be involved in mitochondrial iron or copper homeostatis. The polypeptide is Protein FMP23, mitochondrial (FMP23) (Saccharomyces cerevisiae (strain ATCC 204508 / S288c) (Baker's yeast)).